The sequence spans 299 residues: 4-hydroxy-3-methylbut-2-enyl diphosphate reductase (299 aa).

A [4Fe-4S] cluster-binding site is contributed by C12. (2E)-4-hydroxy-3-methylbut-2-enyl diphosphate is bound by residues H42 and H88. Dimethylallyl diphosphate is bound by residues H42 and H88. Residues H42 and H88 each coordinate isopentenyl diphosphate. C110 contacts [4Fe-4S] cluster. H138 is a (2E)-4-hydroxy-3-methylbut-2-enyl diphosphate binding site. H138 contacts dimethylallyl diphosphate. Position 138 (H138) interacts with isopentenyl diphosphate. The active-site Proton donor is the E140. T177 provides a ligand contact to (2E)-4-hydroxy-3-methylbut-2-enyl diphosphate. C205 is a [4Fe-4S] cluster binding site. The (2E)-4-hydroxy-3-methylbut-2-enyl diphosphate site is built by S233, N235, and S277. Residues S233, N235, and S277 each coordinate dimethylallyl diphosphate. Isopentenyl diphosphate-binding residues include S233, N235, and S277.

The protein belongs to the IspH family. It depends on [4Fe-4S] cluster as a cofactor.

It carries out the reaction isopentenyl diphosphate + 2 oxidized [2Fe-2S]-[ferredoxin] + H2O = (2E)-4-hydroxy-3-methylbut-2-enyl diphosphate + 2 reduced [2Fe-2S]-[ferredoxin] + 2 H(+). It catalyses the reaction dimethylallyl diphosphate + 2 oxidized [2Fe-2S]-[ferredoxin] + H2O = (2E)-4-hydroxy-3-methylbut-2-enyl diphosphate + 2 reduced [2Fe-2S]-[ferredoxin] + 2 H(+). It participates in isoprenoid biosynthesis; dimethylallyl diphosphate biosynthesis; dimethylallyl diphosphate from (2E)-4-hydroxy-3-methylbutenyl diphosphate: step 1/1. The protein operates within isoprenoid biosynthesis; isopentenyl diphosphate biosynthesis via DXP pathway; isopentenyl diphosphate from 1-deoxy-D-xylulose 5-phosphate: step 6/6. Functionally, catalyzes the conversion of 1-hydroxy-2-methyl-2-(E)-butenyl 4-diphosphate (HMBPP) into a mixture of isopentenyl diphosphate (IPP) and dimethylallyl diphosphate (DMAPP). Acts in the terminal step of the DOXP/MEP pathway for isoprenoid precursor biosynthesis. The polypeptide is 4-hydroxy-3-methylbut-2-enyl diphosphate reductase (Malacoplasma penetrans (strain HF-2) (Mycoplasma penetrans)).